The following is a 96-amino-acid chain: Fluoride-specific ion channel FluC 1 (96 aa).

Helical transmembrane passes span 4-24 (LIQGLGVGAGAALGVCVRLAL) and 26-46 (LWLGDSAWPILTINVLGAFLM). Na(+)-binding residues include G61 and T64. Residues 69–89 (MMLNDVSFYFFTAVGCILAWL) form a helical membrane-spanning segment.

The protein belongs to the fluoride channel Fluc/FEX (TC 1.A.43) family.

The protein localises to the cell membrane. It catalyses the reaction fluoride(in) = fluoride(out). Its activity is regulated as follows. Na(+) is not transported, but it plays an essential structural role and its presence is essential for fluoride channel function. Fluoride-specific ion channel. Important for reducing fluoride concentration in the cell, thus reducing its toxicity. The protein is Fluoride-specific ion channel FluC 1 of Corynebacterium glutamicum (strain ATCC 13032 / DSM 20300 / JCM 1318 / BCRC 11384 / CCUG 27702 / LMG 3730 / NBRC 12168 / NCIMB 10025 / NRRL B-2784 / 534).